The sequence spans 725 residues: Polyribonucleotide nucleotidyltransferase (725 aa).

Asp487 and Asp493 together coordinate Mg(2+). The 60-residue stretch at 554–613 (PRIETMQIPTDKIREVIGTGGKVIREIVEKTGAKIDIQDTGVIKIASSDAKAIKAAYNWI) folds into the KH domain. Residues 623–691 (GMIYDGTVVK…ERGKIRLSMK (69 aa)) form the S1 motif domain. Residues 697–725 (TGEDITEKLKAEREADRNRERQARQSAGE) are disordered. Residues 701–719 (ITEKLKAEREADRNRERQA) are compositionally biased toward basic and acidic residues.

The protein belongs to the polyribonucleotide nucleotidyltransferase family. Mg(2+) serves as cofactor.

The protein localises to the cytoplasm. The catalysed reaction is RNA(n+1) + phosphate = RNA(n) + a ribonucleoside 5'-diphosphate. In terms of biological role, involved in mRNA degradation. Catalyzes the phosphorolysis of single-stranded polyribonucleotides processively in the 3'- to 5'-direction. This Methylobacterium nodulans (strain LMG 21967 / CNCM I-2342 / ORS 2060) protein is Polyribonucleotide nucleotidyltransferase.